A 102-amino-acid polypeptide reads, in one-letter code: MPGQKIRIRLKAYDHKLLDESAKKIVEVVKQTNAKVSGPVPLPTERTLYVVLRSPLKHKDSREQFEKRVHKRMIDILEPSPKTIDALMKINLPAGVDVEINL.

Belongs to the universal ribosomal protein uS10 family. In terms of assembly, part of the 30S ribosomal subunit.

Its function is as follows. Involved in the binding of tRNA to the ribosomes. This is Small ribosomal subunit protein uS10 from Thermosipho melanesiensis (strain DSM 12029 / CIP 104789 / BI429).